Consider the following 661-residue polypeptide: Acetyl-coenzyme A synthetase (661 aa).

CoA contacts are provided by residues 197–200 (RGGK) and T320. ATP contacts are provided by residues 396–398 (GEP), 420–425 (DTWWQT), D511, and R526. Residue S534 participates in CoA binding. R537 lines the ATP pocket. Residues V548 and V553 each coordinate Mg(2+). K620 carries the N6-acetyllysine modification.

The protein belongs to the ATP-dependent AMP-binding enzyme family. Mg(2+) is required as a cofactor. Post-translationally, acetylated. Deacetylation by the SIR2-homolog deacetylase activates the enzyme.

It carries out the reaction acetate + ATP + CoA = acetyl-CoA + AMP + diphosphate. Catalyzes the conversion of acetate into acetyl-CoA (AcCoA), an essential intermediate at the junction of anabolic and catabolic pathways. AcsA undergoes a two-step reaction. In the first half reaction, AcsA combines acetate with ATP to form acetyl-adenylate (AcAMP) intermediate. In the second half reaction, it can then transfer the acetyl group from AcAMP to the sulfhydryl group of CoA, forming the product AcCoA. The protein is Acetyl-coenzyme A synthetase of Leptospira interrogans serogroup Icterohaemorrhagiae serovar copenhageni (strain Fiocruz L1-130).